A 164-amino-acid polypeptide reads, in one-letter code: OV-17 antigen (164 aa).

The first 16 residues, methionine 1–alanine 16, serve as a signal peptide directing secretion. The segment at glutamine 24–glutamate 43 is disordered.

The protein belongs to the SXP/RAL-2 family. In terms of tissue distribution, high levels in the hypodermal layer of the adult female.

The polypeptide is OV-17 antigen (OV17) (Onchocerca volvulus).